Consider the following 192-residue polypeptide: Cytidylate kinase (192 aa).

7 to 15 (GPAGSGKST) contributes to the ATP binding site.

The protein belongs to the cytidylate kinase family. Type 2 subfamily.

The protein resides in the cytoplasm. The enzyme catalyses CMP + ATP = CDP + ADP. It carries out the reaction dCMP + ATP = dCDP + ADP. The sequence is that of Cytidylate kinase from Natronomonas pharaonis (strain ATCC 35678 / DSM 2160 / CIP 103997 / JCM 8858 / NBRC 14720 / NCIMB 2260 / Gabara) (Halobacterium pharaonis).